Consider the following 674-residue polypeptide: 1,4-alpha-glucan branching enzyme GlgB 1 (674 aa).

The active-site Nucleophile is Asp-336. Glu-389 serves as the catalytic Proton donor.

Belongs to the glycosyl hydrolase 13 family. GlgB subfamily. As to quaternary structure, monomer.

It carries out the reaction Transfers a segment of a (1-&gt;4)-alpha-D-glucan chain to a primary hydroxy group in a similar glucan chain.. It participates in glycan biosynthesis; glycogen biosynthesis. Functionally, catalyzes the formation of the alpha-1,6-glucosidic linkages in glycogen by scission of a 1,4-alpha-linked oligosaccharide from growing alpha-1,4-glucan chains and the subsequent attachment of the oligosaccharide to the alpha-1,6 position. The polypeptide is 1,4-alpha-glucan branching enzyme GlgB 1 (Clostridium perfringens (strain SM101 / Type A)).